The chain runs to 382 residues: Protein-arginine rhamnosyltransferase (382 aa).

A dTDP-binding site is contributed by 18–19 (FG). D20 (proton acceptor) is an active-site residue. DTDP-beta-L-rhamnose is bound by residues D20, Y187, 250 to 252 (VPQ), and 268 to 272 (RGEDS). Residues Y187, 250–252 (VPQ), and 268–272 (RGEDS) each bind dTDP. Residue E270 is part of the active site.

Belongs to the glycosyltransferase 104 family.

It catalyses the reaction dTDP-beta-L-rhamnose + L-arginyl-[protein] = N(omega)-(alpha-L-rhamnosyl)-L-arginyl-[protein] + dTDP + H(+). In terms of biological role, protein-arginine rhamnosyltransferase that catalyzes the transfer of a single rhamnose to elongation factor P (EF-P) on 'Lys-32', a modification required for EF-P-dependent rescue of polyproline stalled ribosomes. The protein is Protein-arginine rhamnosyltransferase of Neisseria meningitidis serogroup B / serotype 15 (strain H44/76).